Here is a 1379-residue protein sequence, read N- to C-terminus: ATPase histone chaperone YTA7 (1379 aa).

Disordered regions lie at residues 1 to 39 (MARNLRNRRGSDVEDASNAKVGYETQIKDENGIIHTTTR) and 54 to 243 (DFLE…NSRN). Ala2 is subject to N-acetylalanine. Residues Ser11 and Ser17 each carry the phosphoserine modification. The segment covering 61 to 78 (VMDKDETPVDVTSDEHHN) has biased composition (basic and acidic residues). Residue Ser94 is modified to Phosphoserine. Residues 97–110 (ENARTNEELTNERN) show a composition bias toward basic and acidic residues. 2 stretches are compositionally biased toward acidic residues: residues 119 to 152 (PEEDDESFHEEDVDDDEEEEEADEFEDEYLDEDS) and 170 to 184 (DPDDDEEYDEDDEEG). Basic residues predominate over residues 192 to 207 (SSKRLKRANSRRTRSS). Position 212 is a phosphothreonine (Thr212). Basic residues predominate over residues 218 to 228 (RALRSRTRHSR). A Phosphothreonine modification is found at Thr229. 3 positions are modified to phosphoserine: Ser241, Ser259, and Ser285. The tract at residues 302–330 (NPSPARRGRGGWNASQNSGPTRRLFPTGG) is disordered. Residues Ser367, Ser369, and Ser370 each carry the phosphoserine modification. A disordered region spans residues 375-396 (LPLGVTPKTKKENTQKKKKKKP). The segment at 450-578 (VLFHGPPGTG…PALRRPGRFD (129 aa)) is AAA-ATPase; required for its chromatin boundary function. An ATP-binding site is contributed by 454–461 (GPPGTGKT). Phosphoserine is present on Ser735. Residues 974 to 1101 (RLKNVLKIKL…ANAQMGIEEI (128 aa)) enclose the Bromo domain. Ser1142 is modified (phosphoserine). 2 disordered regions span residues 1233–1274 (TCTS…ANTN) and 1291–1316 (LHETVEKRERSPIPKEVVEPEQGKKS). A compositionally biased stretch (basic and acidic residues) spans 1244 to 1254 (ERARKEPKENE). Phosphoserine is present on Ser1256. The span at 1256–1274 (SLQTQVTEENFSKIDANTN) shows a compositional bias: polar residues. A compositionally biased stretch (basic and acidic residues) spans 1293-1316 (ETVEKRERSPIPKEVVEPEQGKKS).

It belongs to the AAA ATPase family. As to quaternary structure, interacts with CSE4/CENP-A. Interacts with SCM3. Interacts with SPT16. Interacts with POB3. Interacts with the casein kinase II complex subunits CKA1, CKA2, CKB1 and CKB2. Interacts with RNA polymerase II. Interacts (via Bromo domain) with histone H3. Interacts (via Bromo domain) with histone H4. Post-translationally, phosphorylated by CDK1 and casein kinase II during S-phase, which leads to its eviction from histone gene promoters and promotes histone gene transcription.

The protein resides in the chromosome. Its subcellular location is the centromere. The protein localises to the nucleus. In terms of biological role, functions as an ATP-dependent nucleosome disassembly factor that helps evict canonical histone H3 from the 5'-end of genes upon their induction. Also contributes to kinetochore assembly by cooperating with SCM3 to load the histone H3 variant CSE4/CENP-A at centromeres. Provides a chromatin boundary function at the 5'-end of genes that restricts access by RTT106 and thus prevents ectopic spreading of repressive chromatin into coding regions. Also prevents heterochromatin spreading downstream of the silent mating-type locus HMR, this function is independent of the tRNA boundary element. Contributes to appropriate cell cycle regulation of histone gene expression by recruiting RNA polymerase II to histone genes, and subsequent CDK1- and casein kinase II-dependent eviction from chromatin is required to promote transcriptional elongation. This is ATPase histone chaperone YTA7 from Saccharomyces cerevisiae (strain ATCC 204508 / S288c) (Baker's yeast).